The sequence spans 470 residues: Type II NADH:quinone oxidoreductase NdhA (470 aa).

Residues 21 to 25 (GSGFG) and Val-89 each bind FAD. Glu-184 is a catalytic residue. FAD contacts are provided by residues Asp-323 and 334–335 (AQ). The chain crosses the membrane as a helical span at residues 389 to 409 (FAGYFAWLAWLVLHLVYLVGY).

The protein belongs to the NADH dehydrogenase family. FAD is required as a cofactor.

Its subcellular location is the cell inner membrane. The catalysed reaction is a quinone + NADH + H(+) = a quinol + NAD(+). The enzyme catalyses a menaquinone + NADH + H(+) = a menaquinol + NAD(+). Its activity is regulated as follows. Inhibited by phenothiazine analogs. Functionally, alternative, nonproton pumping NADH:quinone oxidoreductase that delivers electrons to the respiratory chain by oxidation of NADH and reduction of quinones. This chain is Type II NADH:quinone oxidoreductase NdhA, found in Mycobacterium tuberculosis (strain ATCC 25618 / H37Rv).